The primary structure comprises 67 residues: DNA-directed RNA polymerases I, II, and III subunit RPABC5 (67 aa).

C7, C10, C44, and C45 together coordinate Zn(2+).

Belongs to the archaeal Rpo10/eukaryotic RPB10 RNA polymerase subunit family. As to quaternary structure, component of the RNA polymerase I (Pol I), RNA polymerase II (Pol II) and RNA polymerase III (Pol III) complexes consisting of at least 13, 12 and 17 subunits, respectively.

It localises to the nucleus. Its function is as follows. DNA-dependent RNA polymerase catalyzes the transcription of DNA into RNA using the four ribonucleoside triphosphates as substrates. Common component of RNA polymerases I, II and III which synthesize ribosomal RNA precursors, mRNA precursors and many functional non-coding RNAs, and a small RNAs, such as 5S rRNA and tRNAs, respectively. Pol II is the central component of the basal RNA polymerase II transcription machinery. Pols are composed of mobile elements that move relative to each other. In Pol II, RBP10 is part of the core element with the central large cleft. In Caenorhabditis briggsae, this protein is DNA-directed RNA polymerases I, II, and III subunit RPABC5.